The following is a 416-amino-acid chain: Serine hydroxymethyltransferase (416 aa).

Residues Leu-121 and 125 to 127 (GHL) contribute to the (6S)-5,6,7,8-tetrahydrofolate site. Lys-229 carries the post-translational modification N6-(pyridoxal phosphate)lysine.

Belongs to the SHMT family. In terms of assembly, homodimer. It depends on pyridoxal 5'-phosphate as a cofactor.

The protein localises to the cytoplasm. It catalyses the reaction (6R)-5,10-methylene-5,6,7,8-tetrahydrofolate + glycine + H2O = (6S)-5,6,7,8-tetrahydrofolate + L-serine. The protein operates within one-carbon metabolism; tetrahydrofolate interconversion. It functions in the pathway amino-acid biosynthesis; glycine biosynthesis; glycine from L-serine: step 1/1. Catalyzes the reversible interconversion of serine and glycine with tetrahydrofolate (THF) serving as the one-carbon carrier. This reaction serves as the major source of one-carbon groups required for the biosynthesis of purines, thymidylate, methionine, and other important biomolecules. Also exhibits THF-independent aldolase activity toward beta-hydroxyamino acids, producing glycine and aldehydes, via a retro-aldol mechanism. This is Serine hydroxymethyltransferase from Neisseria meningitidis serogroup C / serotype 2a (strain ATCC 700532 / DSM 15464 / FAM18).